We begin with the raw amino-acid sequence, 217 residues long: GTP-binding protein Rit2 (217 aa).

GTP-binding positions include 27–34, 74–78, and 133–136; these read GAGGVGKS, DTAGQ, and NKID.

The protein belongs to the small GTPase superfamily. Ras family. As to quaternary structure, interacts with PLXNB3. Interacts with AFDN, the C-terminal domain of RALGDS and RLF, but not with RIN1 and PIK3CA. RLF binds exclusively to the active GTP-bound form. Binds calmodulin. Interacts with POU4F1 (via N-terminus); the interaction controls POU4F1 transactivation activity on some neuronal target genes. In terms of tissue distribution, expressed in ganglion cell layer (GCL), inner plexiform layer (IPL) and inner nuclear layer (INL) of the retina. Expressed in retinal ganglion cells (RGCs). Expressed in horizontal, bipolar and amacrine cells, but not Mueller glia, of the INL (at protein level). Neuron-specific. Expressed in ganglion cell layer (GCL) and inner plexiform layer (IPL).

It localises to the nucleus. The protein localises to the cell membrane. The enzyme catalyses GTP + H2O = GDP + phosphate + H(+). Its activity is regulated as follows. Alternates between an inactive form bound to GDP and an active form bound to GTP. Binds and exchanges GTP and GDP. Binds and modulates the activation of POU4F1 as gene expression regulator. In Mus musculus (Mouse), this protein is GTP-binding protein Rit2 (Rit2).